Here is a 93-residue protein sequence, read N- to C-terminus: Integration host factor subunit beta (93 aa).

The protein belongs to the bacterial histone-like protein family. Heterodimer of an alpha and a beta chain.

In terms of biological role, this protein is one of the two subunits of integration host factor, a specific DNA-binding protein that functions in genetic recombination as well as in transcriptional and translational control. This Haemophilus ducreyi (strain 35000HP / ATCC 700724) protein is Integration host factor subunit beta.